The chain runs to 438 residues: Cysteine--tRNA ligase (438 aa).

Cys28 contacts Zn(2+). Positions 30–40 match the 'HIGH' region motif; that stretch reads PTVYNHLHLGN. 3 residues coordinate Zn(2+): Cys207, His232, and Glu236. The 'KMSKS' region motif lies at 264 to 268; it reads KMSKS. ATP is bound at residue Lys267.

This sequence belongs to the class-I aminoacyl-tRNA synthetase family. Monomer. The cofactor is Zn(2+).

It is found in the cytoplasm. It carries out the reaction tRNA(Cys) + L-cysteine + ATP = L-cysteinyl-tRNA(Cys) + AMP + diphosphate. The polypeptide is Cysteine--tRNA ligase (Onion yellows phytoplasma (strain OY-M)).